Reading from the N-terminus, the 141-residue chain is UPF0310 protein Mflv_0785 (141 aa).

Belongs to the UPF0310 family.

The chain is UPF0310 protein Mflv_0785 from Mycolicibacterium gilvum (strain PYR-GCK) (Mycobacterium gilvum (strain PYR-GCK)).